A 160-amino-acid polypeptide reads, in one-letter code: MKTKMITREGYNKLKQELDYLWKEHRPEITQKVSWAASLGDRSENADYTYNKRLLRQIDRRVRFLSKFLPEVKIVDYAPQQEGKVFFGAWVEIENEAGEVMKFRIVGPEEIYGDAKGYISIDSPMARALLKKEVDDEVQVPTPSGIKEWFINSIEYDKGQ.

It belongs to the GreA/GreB family. GreB subfamily.

Necessary for efficient RNA polymerase transcription elongation past template-encoded arresting sites. The arresting sites in DNA have the property of trapping a certain fraction of elongating RNA polymerases that pass through, resulting in locked ternary complexes. Cleavage of the nascent transcript by cleavage factors such as GreA or GreB allows the resumption of elongation from the new 3'terminus. GreB releases sequences of up to 9 nucleotides in length. The polypeptide is Transcription elongation factor GreB (Vibrio vulnificus (strain YJ016)).